The chain runs to 375 residues: GTPase HflX (375 aa).

The region spanning proline 194–lysine 371 is the Hflx-type G domain. GTP-binding positions include glycine 200–threonine 207, phenylalanine 225–threonine 229, aspartate 246–glycine 249, asparagine 314–aspartate 317, and serine 349–lysine 351. Mg(2+) contacts are provided by threonine 207 and threonine 227.

This sequence belongs to the TRAFAC class OBG-HflX-like GTPase superfamily. HflX GTPase family. Monomer. Associates with the 50S ribosomal subunit. It depends on Mg(2+) as a cofactor.

It is found in the cytoplasm. GTPase that associates with the 50S ribosomal subunit and may have a role during protein synthesis or ribosome biogenesis. This chain is GTPase HflX, found in Hyperthermus butylicus (strain DSM 5456 / JCM 9403 / PLM1-5).